A 585-amino-acid chain; its full sequence is Arginine--tRNA ligase (585 aa).

A 'HIGH' region motif is present at residues 131–141 (ANPTGPMHVGH).

Belongs to the class-I aminoacyl-tRNA synthetase family. As to quaternary structure, monomer.

It localises to the cytoplasm. It catalyses the reaction tRNA(Arg) + L-arginine + ATP = L-arginyl-tRNA(Arg) + AMP + diphosphate. This Allorhizobium ampelinum (strain ATCC BAA-846 / DSM 112012 / S4) (Agrobacterium vitis (strain S4)) protein is Arginine--tRNA ligase.